Here is a 531-residue protein sequence, read N- to C-terminus: Peptide chain release factor 3 (531 aa).

In terms of domain architecture, tr-type G spans 10-278; sequence RRRRTFAIIS…SLIDWAPAPK (269 aa). Residues 19-26, 87-91, and 141-144 contribute to the GTP site; these read SHPDAGKT, DTPGH, and NKYD.

Belongs to the TRAFAC class translation factor GTPase superfamily. Classic translation factor GTPase family. PrfC subfamily.

It localises to the cytoplasm. Functionally, increases the formation of ribosomal termination complexes and stimulates activities of RF-1 and RF-2. It binds guanine nucleotides and has strong preference for UGA stop codons. It may interact directly with the ribosome. The stimulation of RF-1 and RF-2 is significantly reduced by GTP and GDP, but not by GMP. This is Peptide chain release factor 3 from Neisseria gonorrhoeae (strain NCCP11945).